The following is a 122-amino-acid chain: Large ribosomal subunit protein uL14 (122 aa).

It belongs to the universal ribosomal protein uL14 family. As to quaternary structure, part of the 50S ribosomal subunit. Forms a cluster with proteins L3 and L19. In the 70S ribosome, L14 and L19 interact and together make contacts with the 16S rRNA in bridges B5 and B8.

Its function is as follows. Binds to 23S rRNA. Forms part of two intersubunit bridges in the 70S ribosome. The protein is Large ribosomal subunit protein uL14 of Staphylococcus epidermidis (strain ATCC 35984 / DSM 28319 / BCRC 17069 / CCUG 31568 / BM 3577 / RP62A).